The chain runs to 437 residues: 3-phosphoshikimate 1-carboxyvinyltransferase (437 aa).

3 residues coordinate 3-phosphoshikimate: Lys26, Ser27, and Arg31. Lys26 lines the phosphoenolpyruvate pocket. Gly99 and Arg127 together coordinate phosphoenolpyruvate. Residues Ser172, Gln174, Asp320, and Lys347 each coordinate 3-phosphoshikimate. Gln174 contributes to the phosphoenolpyruvate binding site. Asp320 acts as the Proton acceptor in catalysis. Residues Arg351 and Arg392 each coordinate phosphoenolpyruvate.

The protein belongs to the EPSP synthase family. As to quaternary structure, monomer.

It localises to the cytoplasm. It carries out the reaction 3-phosphoshikimate + phosphoenolpyruvate = 5-O-(1-carboxyvinyl)-3-phosphoshikimate + phosphate. Its pathway is metabolic intermediate biosynthesis; chorismate biosynthesis; chorismate from D-erythrose 4-phosphate and phosphoenolpyruvate: step 6/7. Catalyzes the transfer of the enolpyruvyl moiety of phosphoenolpyruvate (PEP) to the 5-hydroxyl of shikimate-3-phosphate (S3P) to produce enolpyruvyl shikimate-3-phosphate and inorganic phosphate. This is 3-phosphoshikimate 1-carboxyvinyltransferase from Methylococcus capsulatus (strain ATCC 33009 / NCIMB 11132 / Bath).